The sequence spans 807 residues: MKYDFSALEKKWQSRWADEQTFASSADQEKPKYYVLDMFPYPSGSGLHVGHLEGYTATDIMARYKRCQGHNVLHPMGWDAFGLPAEQFAIKTGTHPRLTTEKNVASFRETLKSMGFSYDWSREINTTDPNYFKWTQWIFLKLYEKGLAYISEVDVNWCEELKVVLANEEVDEKIADGYTVVRRPLRQWVLKITAYAERLLKDLDEVDWPENVKQMQRNWIGRSEGMEIDFELRCHRTNLRVYTTRPDTLFGATYLVISPEHPMAEKLAIAQQLVAVKKYIEQAKLKTELERTGLQKEKTGVFTGSYAINPANGEALPVWISDFVLTSYGTGAIMSVPAHDSRDWEFAKKFGLPIREVIKSPHDVQERVFDGKESVCVNSANDEISINGLDFKTAFDRMAAWLESKGKGKRKVNYKLRDWVFSRQRYWGEPIPIKHYEDGTMRPETNLPLTLPEVEAYQPTSTGESPLANIESWLYGEDEHGKFRRETNTMPQWAGSCWYYLRFIDPQNSDALVDPSLEQYWMNVDLYIGGAEHAVLHLLYSRFWHKVLYDLGVVSTKEPFQRLFNQGMILGEDNEKMSKSRGNVIPADHVLSTYGADALRLYEMFLGPLDQVKPWNTHGIEGISRFLNKVWRLVWDENTETQKTTEDKPSEAILKRMHKAIKKVTEDTEQLKFNTAISEMMVLVNELHKAGCYSRETTETLLVLLSPFAPHITEELWQALGHAESISGAVWPVFDAKLATDDVLTIAVQVNGKLRGTFEAPAGCTKEEMIESAKKVESVAKFLDGQQIVKEIAVPGKLVNFAVKPQQ.

Positions 40–51 (PYPSGSGLHVGH) match the 'HIGH' region motif. Residues 576–580 (KMSKS) carry the 'KMSKS' region motif. Residue K579 coordinates ATP.

The protein belongs to the class-I aminoacyl-tRNA synthetase family.

The protein resides in the cytoplasm. The catalysed reaction is tRNA(Leu) + L-leucine + ATP = L-leucyl-tRNA(Leu) + AMP + diphosphate. The chain is Leucine--tRNA ligase from Chlorobaculum tepidum (strain ATCC 49652 / DSM 12025 / NBRC 103806 / TLS) (Chlorobium tepidum).